Here is a 537-residue protein sequence, read N- to C-terminus: Methylmalonate-semialdehyde/malonate-semialdehyde dehydrogenase [acylating], mitochondrial (537 aa).

The N-terminal 34 residues, 1–34, are a transit peptide targeting the mitochondrion; it reads MAAVAVAAAAAALRARILQVSSKVNSSWQPASSF. An N6-acetyllysine; alternate mark is found at Lys49, Lys54, Lys57, and Lys78. An N6-succinyllysine; alternate mark is found at Lys49, Lys54, Lys57, and Lys78. Residue Lys89 is modified to N6-acetyllysine. 2 positions are modified to N6-acetyllysine; alternate: Lys119 and Lys131. Lys119 and Lys131 each carry N6-succinyllysine; alternate. NAD(+) is bound by residues Ala185, Phe187, Lys211, Glu214, Arg215, and Ser264. Ser264 is modified (phosphoserine). Lys300 is modified (N6-acetyllysine). Catalysis depends on Cys319, which acts as the Nucleophile. 2 positions are modified to N6-acetyllysine: Lys332 and Lys333. Residues Lys366 and Lys378 each carry the N6-acetyllysine; alternate modification. Lys366 and Lys378 each carry N6-succinyllysine; alternate. Phosphoserine is present on Ser382. Position 393 is an N6-succinyllysine (Lys393). Position 419 (Glu419) interacts with NAD(+). Residue Lys502 is modified to N6-acetyllysine. An N6-succinyllysine modification is found at Lys519.

It belongs to the aldehyde dehydrogenase family. As to quaternary structure, homodimer. The N-terminus is blocked.

It localises to the mitochondrion. It catalyses the reaction 2-methyl-3-oxopropanoate + NAD(+) + CoA + H2O = propanoyl-CoA + hydrogencarbonate + NADH + H(+). It carries out the reaction 3-oxopropanoate + NAD(+) + CoA + H2O = hydrogencarbonate + acetyl-CoA + NADH + H(+). The enzyme catalyses (R)-2-methyl-3-oxopropanoate + NAD(+) + CoA + H2O = propanoyl-CoA + hydrogencarbonate + NADH + H(+). The catalysed reaction is (S)-2-methyl-3-oxopropanoate + NAD(+) + CoA + H2O = propanoyl-CoA + hydrogencarbonate + NADH + H(+). Functionally, malonate and methylmalonate semialdehyde dehydrogenase involved in the catabolism of valine, thymine, and compounds catabolized by way of beta-alanine, including uracil and cytidine. This Bos taurus (Bovine) protein is Methylmalonate-semialdehyde/malonate-semialdehyde dehydrogenase [acylating], mitochondrial (ALDH6A1).